The primary structure comprises 402 residues: FMN-dependent alpha-hydroxy acid dehydrogenase qulF (402 aa).

Residues 22 to 394 (RLPAITTNPT…NRDCMRRISY (373 aa)) form the FMN hydroxy acid dehydrogenase domain. An a 2-oxocarboxylate-binding site is contributed by tyrosine 48. Residues serine 130 and glutamine 152 each contribute to the FMN site. Residues tyrosine 154 and arginine 189 each coordinate a 2-oxocarboxylate. Lysine 265 provides a ligand contact to FMN. Histidine 289 functions as the Proton acceptor in the catalytic mechanism. Position 292 (arginine 292) interacts with a 2-oxocarboxylate. Residues 320–324 (DSGVR) and 343–344 (GR) each bind FMN.

The protein belongs to the FMN-dependent alpha-hydroxy acid dehydrogenase family. It depends on FMN as a cofactor.

FMN-dependent alpha-hydroxy acid dehydrogenase; part of the gene cluster that mediates the biosynthesis of quinolactacin A2 (QUL A2), a fungal alkaloid that features a quinolone-gamma-lactam hybrid, which is a potential pharmacophore for the treatment of cancer and Alzheimer's disease. The quinolone-gamma-lactam hybrid scaffold is synthesized from the combination of L-isoleucine (L-Ile) and the nonproteinogenic amino acid L-kynurenine, followed by quinolone cyclization, oxidative decarboxylation, and lactam formation. Additionally, the N-methyl group is derived from methionine, which might be catalyzed by an S-adenosylmethionine (SAM)-dependent methyltransferase. Bioconversion of L-tryptophan to L-kynurenine could be catalyzed by the indoleamine-2,3-dioxygenase (IDO) qulI to produce an unstable product, N-formyl-L-kynurenine, followed by kynurenine formamidase catalyzed hydrolysis. QulM then acts as a methyltransferase that methylates L-kynurenine at the N-4 position. The FMN-dependent alpha-hydroxy acid dehydrogenase qulF than functions as an oxidative decarboxylase which converts N-methylkynurenine into 2-aminobenzoylacetamide via 2 tandem reactions, including dehydrogenation and decarboxylation. An amidase located outside of the qul gene cluster further produces the unstable beta-keto acid precursor N-methyl-2-aminobenzoylacetate, which could be spontaneously dehydrated to form N-methyl-4-hydroxy-2-quinolone. The NRPS qulB is able to incorporate N-methyl-2-aminobenzoylacetate and efficiently compete with the spontaneous reaction. By further extending the beta-keto acid with L-Ile, qulA performs a Dieckmann condensation to form the gamma-lactam ring and release a 4-ketopyrrolidinone intermediate from the assembly line. This intermediate could plausibly further undergo a spontaneous cyclization to yield the final quinolone-gamma-lactam hybrid structure. The chain is FMN-dependent alpha-hydroxy acid dehydrogenase qulF from Penicillium citrinum.